Consider the following 207-residue polypeptide: Probable GTP-binding protein EngB (207 aa).

Positions 23 to 203 (GAPEVCFVGR…GAHIENWISP (181 aa)) constitute an EngB-type G domain. GTP contacts are provided by residues 31 to 38 (GRSNAGKS), 58 to 62 (GRTRL), 83 to 86 (DLPG), 150 to 153 (TKAD), and 182 to 184 (FSS). Mg(2+) contacts are provided by Ser-38 and Thr-60.

Belongs to the TRAFAC class TrmE-Era-EngA-EngB-Septin-like GTPase superfamily. EngB GTPase family. The cofactor is Mg(2+).

Its function is as follows. Necessary for normal cell division and for the maintenance of normal septation. This chain is Probable GTP-binding protein EngB, found in Bordetella bronchiseptica (strain ATCC BAA-588 / NCTC 13252 / RB50) (Alcaligenes bronchisepticus).